A 299-amino-acid chain; its full sequence is Release factor glutamine methyltransferase (299 aa).

S-adenosyl-L-methionine is bound by residues 134–138, D157, W186, and N203; that span reads GTGSG. A substrate-binding site is contributed by 203–206; the sequence is NPPY.

Belongs to the protein N5-glutamine methyltransferase family. PrmC subfamily.

It catalyses the reaction L-glutaminyl-[peptide chain release factor] + S-adenosyl-L-methionine = N(5)-methyl-L-glutaminyl-[peptide chain release factor] + S-adenosyl-L-homocysteine + H(+). Its function is as follows. Methylates the class 1 translation termination release factors RF1/PrfA and RF2/PrfB on the glutamine residue of the universally conserved GGQ motif. This is Release factor glutamine methyltransferase from Synechocystis sp. (strain ATCC 27184 / PCC 6803 / Kazusa).